The sequence spans 446 residues: Citrate/sodium symporter (446 aa).

The next 5 membrane-spanning stretches (helical) occupy residues 23-43 (IFGM…LSHF), 46-66 (AIPT…AIFG), 79-99 (IGGA…AGIF), 110-130 (VMDK…GAIL), and 148-168 (ILAG…CFGI). Na(+) is bound by residues I181 and G183. The citrate site is built by N186 and G187. 5 consecutive transmembrane segments (helical) span residues 213 to 233 (IAIL…LDMI), 267 to 287 (ETAV…VVAK), 289 to 309 (ILPS…LIVA), 335 to 355 (QLLW…QEII), and 364 to 384 (VIAA…GWLI). Na(+) contacts are provided by M399 and N401. Citrate contacts are provided by R402, G404, S405, and R428. Residues 425 to 445 (ISSRLGGGIVLVIASIVFSMM) form a helical membrane-spanning segment.

The protein belongs to the 2-hydroxycarboxylate transporter (2-HCT) (TC 2.A.24) family. As to quaternary structure, homodimer.

It is found in the cell inner membrane. It carries out the reaction citrate(out) + 2 Na(+)(out) = citrate(in) + 2 Na(+)(in). In terms of biological role, secondary active transporter that catalyzes the uptake of citrate across the membrane with the concomitant uptake of sodium. Is specific for citrate. In Salmonella dublin, this protein is Citrate/sodium symporter.